The following is a 388-amino-acid chain: Mannitol-1-phosphate 5-dehydrogenase (388 aa).

An NAD(+)-binding site is contributed by 5–16 (AIQFGGGNIGRG). The active site involves Lys213.

It belongs to the mannitol dehydrogenase family. Monomer.

The enzyme catalyses D-mannitol 1-phosphate + NAD(+) = beta-D-fructose 6-phosphate + NADH + H(+). Functionally, catalyzes the NAD(H)-dependent interconversion of D-fructose 6-phosphate and D-mannitol 1-phosphate in the mannitol metabolic pathway. The sequence is that of Mannitol-1-phosphate 5-dehydrogenase (mpdA) from Aspergillus terreus (strain NIH 2624 / FGSC A1156).